The chain runs to 258 residues: Phosphosulfolactate synthase (258 aa).

This sequence belongs to the phosphosulfolactate synthase family.

It carries out the reaction (2R)-O-phospho-3-sulfolactate = phosphoenolpyruvate + sulfite + H(+). The protein operates within cofactor biosynthesis; coenzyme M biosynthesis; sulfoacetaldehyde from phosphoenolpyruvate and sulfite: step 1/4. In terms of biological role, catalyzes the addition of sulfite to phosphoenolpyruvate (PEP) to yield (2R)-phospho-3-sulfolactate (PSL). The chain is Phosphosulfolactate synthase (comA) from Methanothermobacter thermautotrophicus (strain ATCC 29096 / DSM 1053 / JCM 10044 / NBRC 100330 / Delta H) (Methanobacterium thermoautotrophicum).